The chain runs to 267 residues: MEMO1 family protein MA_0601 (267 aa).

This sequence belongs to the MEMO1 family.

This chain is MEMO1 family protein MA_0601, found in Methanosarcina acetivorans (strain ATCC 35395 / DSM 2834 / JCM 12185 / C2A).